A 244-amino-acid polypeptide reads, in one-letter code: Small ribosomal subunit protein uS2 (244 aa).

This sequence belongs to the universal ribosomal protein uS2 family.

The polypeptide is Small ribosomal subunit protein uS2 (Buchnera aphidicola subsp. Acyrthosiphon pisum (strain 5A)).